The following is a 90-amino-acid chain: DNA-binding protein HU-1 (90 aa).

Residue threonine 4 is modified to Phosphothreonine. The disordered stretch occupies residues 55 to 90 (RSARKGRNPQTGEEIEIPATKNPAFKPGKQLKDAVN).

The protein belongs to the bacterial histone-like protein family. In terms of assembly, homodimer.

Functionally, histone-like DNA-binding protein which is capable of wrapping DNA to stabilize it, and thus to prevent its denaturation under extreme environmental conditions. The sequence is that of DNA-binding protein HU-1 (hup1) from Halalkalibacterium halodurans (strain ATCC BAA-125 / DSM 18197 / FERM 7344 / JCM 9153 / C-125) (Bacillus halodurans).